The chain runs to 206 residues: Proteasome subunit beta 2 (206 aa).

A propeptide spans 1 to 10 (MLHLKEKLKG) (removed in mature form; by autocatalysis). Catalysis depends on Thr11, which acts as the Nucleophile.

It belongs to the peptidase T1B family. As to quaternary structure, the 20S proteasome core is composed of 14 alpha and 14 beta subunits that assemble into four stacked heptameric rings, resulting in a barrel-shaped structure. The two inner rings, each composed of seven catalytic beta subunits, are sandwiched by two outer rings, each composed of seven alpha subunits. The catalytic chamber with the active sites is on the inside of the barrel. Has a gated structure, the ends of the cylinder being occluded by the N-termini of the alpha-subunits. Is capped at one or both ends by the proteasome regulatory ATPase, PAN.

Its subcellular location is the cytoplasm. It catalyses the reaction Cleavage of peptide bonds with very broad specificity.. Its activity is regulated as follows. The formation of the proteasomal ATPase PAN-20S proteasome complex, via the docking of the C-termini of PAN into the intersubunit pockets in the alpha-rings, triggers opening of the gate for substrate entry. Interconversion between the open-gate and close-gate conformations leads to a dynamic regulation of the 20S proteasome proteolysis activity. Functionally, component of the proteasome core, a large protease complex with broad specificity involved in protein degradation. This Pyrococcus furiosus (strain ATCC 43587 / DSM 3638 / JCM 8422 / Vc1) protein is Proteasome subunit beta 2.